The sequence spans 89 residues: Small ribosomal subunit protein uS15 (89 aa).

Residues 1 to 10 (MSLDTTEKQE) are compositionally biased toward basic and acidic residues. A disordered region spans residues 1-23 (MSLDTTEKQELINAHQTHATDTG). Residues 14–23 (AHQTHATDTG) are compositionally biased toward polar residues.

This sequence belongs to the universal ribosomal protein uS15 family. In terms of assembly, part of the 30S ribosomal subunit. Forms a bridge to the 50S subunit in the 70S ribosome, contacting the 23S rRNA.

One of the primary rRNA binding proteins, it binds directly to 16S rRNA where it helps nucleate assembly of the platform of the 30S subunit by binding and bridging several RNA helices of the 16S rRNA. Its function is as follows. Forms an intersubunit bridge (bridge B4) with the 23S rRNA of the 50S subunit in the ribosome. In Synechococcus sp. (strain WH7803), this protein is Small ribosomal subunit protein uS15.